The primary structure comprises 190 residues: MRTINSNQCVKIPKDIKASVKARVVTITGTRGTLKRSFKHLALDMYMPDKRTLKVEKWFGTKKELAAVRTVCSHIENMIKGVTFGFQYKMRAVYAHFPINCVTSENNTVIEIRNFLGEKYIRRVEMAPGVTVVNSTAQKDELIVEGNDIESVSGSAALIQQSTTVKNKDIRKFLDGLYVSEKTTVVKLES.

It belongs to the universal ribosomal protein uL6 family.

The protein is Large ribosomal subunit protein uL6 (RpL9) of Drosophila melanogaster (Fruit fly).